The sequence spans 251 residues: Aliphatic sulfonates import ATP-binding protein SsuB (251 aa).

Residues 19–238 enclose the ABC transporter domain; that stretch reads GELRHVDKWY…PGEPGAHTER (220 aa). 51–58 provides a ligand contact to ATP; that stretch reads GRSGSGKS.

This sequence belongs to the ABC transporter superfamily. Aliphatic sulfonates importer (TC 3.A.1.17.2) family. As to quaternary structure, the complex is composed of two ATP-binding proteins (SsuB), two transmembrane proteins (SsuC) and a solute-binding protein (SsuA).

It is found in the cell membrane. The catalysed reaction is ATP + H2O + aliphatic sulfonate-[sulfonate-binding protein]Side 1 = ADP + phosphate + aliphatic sulfonateSide 2 + [sulfonate-binding protein]Side 1.. Part of the ABC transporter complex SsuABC involved in aliphatic sulfonates import. Responsible for energy coupling to the transport system. The polypeptide is Aliphatic sulfonates import ATP-binding protein SsuB (Mycobacterium avium (strain 104)).